A 336-amino-acid chain; its full sequence is Glycerol-3-phosphate dehydrogenase [NAD(P)+] (336 aa).

NADPH is bound by residues Ser-14, Trp-15, Arg-35, Arg-36, and Lys-109. Sn-glycerol 3-phosphate contacts are provided by Lys-109 and Gly-139. Ala-143 contributes to the NADPH binding site. Residues Lys-194, Asp-247, Ser-257, Arg-258, and Asn-259 each coordinate sn-glycerol 3-phosphate. Residue Lys-194 is the Proton acceptor of the active site. Arg-258 serves as a coordination point for NADPH. Residue Glu-284 coordinates NADPH.

This sequence belongs to the NAD-dependent glycerol-3-phosphate dehydrogenase family.

The protein localises to the cytoplasm. The catalysed reaction is sn-glycerol 3-phosphate + NAD(+) = dihydroxyacetone phosphate + NADH + H(+). It carries out the reaction sn-glycerol 3-phosphate + NADP(+) = dihydroxyacetone phosphate + NADPH + H(+). It functions in the pathway membrane lipid metabolism; glycerophospholipid metabolism. In terms of biological role, catalyzes the reduction of the glycolytic intermediate dihydroxyacetone phosphate (DHAP) to sn-glycerol 3-phosphate (G3P), the key precursor for phospholipid synthesis. The sequence is that of Glycerol-3-phosphate dehydrogenase [NAD(P)+] from Streptomyces avermitilis (strain ATCC 31267 / DSM 46492 / JCM 5070 / NBRC 14893 / NCIMB 12804 / NRRL 8165 / MA-4680).